A 469-amino-acid polypeptide reads, in one-letter code: Pancreatic lipase-related protein 2 (469 aa).

The signal sequence occupies residues 1–17; the sequence is MLPPWTLGLLLLATVRG. C21 and C27 form a disulfide bridge. The segment at 93 to 105 is required for galactolipase activity; sequence IHGFLDKAEDSWP. The cysteines at positions 109 and 120 are disulfide-linked. Residue S171 is the Nucleophile of the active site. The active-site Charge relay system is D195. E206, R209, D211, and D214 together coordinate Ca(2+). Residues C256 and C280 are joined by a disulfide bond. Residues 257-279 are required for galactolipase activity; it reads KKNVLSTITDIDGIWEGIGGFVS. Residue H282 is the Charge relay system of the active site. Cystine bridges form between C304–C315 and C318–C323. N-linked (GlcNAc...) asparagine glycosylation is found at N353 and N428. The 113-residue stretch at 357-469 folds into the PLAT domain; sequence WRYKISVTLS…ENVLQSLYPC (113 aa). A disulfide bond links C453 and C469.

The protein belongs to the AB hydrolase superfamily. Lipase family. Pancreas.

The protein resides in the secreted. Its subcellular location is the zymogen granule membrane. The protein localises to the cell projection. It localises to the neuron projection. It catalyses the reaction a triacylglycerol + H2O = a diacylglycerol + a fatty acid + H(+). The catalysed reaction is a 1,2-diacyl-3-O-(beta-D-galactosyl)-sn-glycerol + 2 H2O = 3-beta-D-galactosyl-sn-glycerol + 2 a fatty acid + 2 H(+). The enzyme catalyses 1,2,3-tri-(9Z-octadecenoyl)-glycerol + H2O = di-(9Z)-octadecenoylglycerol + (9Z)-octadecenoate + H(+). It carries out the reaction di-(9Z)-octadecenoylglycerol + H2O = (9Z-octadecenoyl)-glycerol + (9Z)-octadecenoate + H(+). It catalyses the reaction (9Z-octadecenoyl)-glycerol + H2O = glycerol + (9Z)-octadecenoate + H(+). The catalysed reaction is 1-(9Z-octadecenoyl)-glycerol + H2O = glycerol + (9Z)-octadecenoate + H(+). The enzyme catalyses 1,2,3-tripropanoylglycerol + H2O = dipropanoylglycerol + propanoate + H(+). It carries out the reaction 1,2,3-tributanoylglycerol + H2O = dibutanoylglycerol + butanoate + H(+). It catalyses the reaction 1,2,3-trioctanoylglycerol + H2O = dioctanoylglycerol + octanoate + H(+). The catalysed reaction is 1,2-didecanoylglycerol + H2O = decanoylglycerol + decanoate + H(+). The enzyme catalyses long chain 1,2-diacyl-3-O-beta-D-galactosyl-sn-glycerol + H2O = long chain acyl-3-O-beta-D-galactosyl-sn-glycerol + a fatty acid + H(+). It carries out the reaction 1,2-dioctanoyl-3-O-beta-D-galactosyl-sn-glycerol + H2O = octanoyl-3-(beta-D-galactosyl)-sn-glycerol + octanoate + H(+). It catalyses the reaction 1,2-didodecanoyl-3-beta-D-galactosyl-sn-glycerol + H2O = dodecanoyl-3-beta-D-galactosyl-sn-glycerol + dodecanoate + H(+). The catalysed reaction is 1-beta-D-galactosyl-2,3-didodecanoyl-sn-glycerol + H2O = 1-beta-D-galactosyl-dodecanoyl-sn-glycerol + dodecanoate + H(+). The enzyme catalyses a 1,2-diacyl-3-O-[alpha-D-galactosyl-(1-&gt;6)-beta-D-galactosyl]-sn-glycerol + H2O = acyl-3-O-[alpha-D-galactosyl-(1-&gt;6)-beta-D-galactosyl]-sn-glycerol + a fatty acid + H(+). It carries out the reaction long chain 1,2-diacyl-3-O-[alpha-D-galactosyl-(1-&gt;6)-beta-D-galactosyl]-sn-glycerol + H2O = long chain acyl-3-O-[alpha-D-galactosyl-(1-&gt;6)-beta-D-galactosyl]-sn-glycerol + a fatty acid + H(+). It catalyses the reaction 1,2-dioctanoyl-3-O-[alpha-D-galactosyl-(1-&gt;6)-beta-D-galactosyl]-sn-glycerol + H2O = octanoyl-3-O-[alpha-D-galactosyl-(1-&gt;6)-beta-D-galactosyl]-sn-glycerol + octanoate + H(+). The catalysed reaction is 1,2-didodecanoyl-3-O-[alpha-D-galactosyl-(1-&gt;6)-beta-D-galactosyl]-sn-glycerol + H2O = dodecanoyl-3-O-[alpha-D-galactosyl-(1-&gt;6)-beta-D-galactosyl]-sn-glycerol + dodecanoate + H(+). The enzyme catalyses a 1,2-diacyl-sn-glycero-3-phosphocholine + H2O = a monoacyl-sn-glycero-3-phosphocholine + a fatty acid + H(+). It functions in the pathway glycerolipid metabolism; triacylglycerol degradation. It participates in glycolipid metabolism. With respect to regulation, regulated by CLPS and bile salts levels ranging 1-5 mM in neonates and 2-30 mM in healthy adults. CLPS stimulates milk fat digestion in the presence of 4 mM bile salts. Triacylglycerol lipase activity toward short- and medium-chain triglycerides is inhibited by increasing concentrations of bile salts and weakly reactivated by CLPS. Optimal triacylglycerol lipase activity is reached at bile salts concentrations ranging from 0.1 to 0.5 mM and then decreases at concentrations higher than 1 mM. Lipase activity toward long-chain glycerolipids is stimulated by CLPS in the presence of 4 mM bile salts. Galactolipase activity is inhibited at high concentrations of bile salts. Triacylglycerol lipase activity is inhibited by anti-obesity drug tetrahydrolipstatin. Lipase that primarily hydrolyzes triglycerides and galactosylglycerides. In neonates, may play a major role in pancreatic digestion of dietary fats such as milk fat globules enriched in long-chain triglycerides. Hydrolyzes short-, medium- and long-chain fatty acyls in triglycerides without apparent positional specificity. Can completely deacylate triacylglycerols. When the liver matures and bile salt synthesis increases, likely functions mainly as a galactolipase and monoacylglycerol lipase. Hydrolyzes monogalactosyldiglycerols (MGDG) and digalactosyldiacylglycerols (DGDG) present in a plant-based diet, releasing long-chain polyunsaturated fatty acids. Hydrolyzes medium- and long-chain fatty acyls in galactolipids. May act together with LIPF to hydrolyze partially digested triglycerides. Hydrolyzes long-chain monoglycerides with high efficiency. In cytotoxic T cells, contributes to perforin-dependent cell lysis, but is unlikely to mediate direct cytotoxicity. Also has low phospholipase activity. In neurons, required for the localization of the phospholipid 1-oleoyl-2-palmitoyl-PC (OPPC) to neurite tips through acyl chain remodeling of membrane phospholipids. The resulting OPPC-rich lipid membrane domain recruits the t-SNARE protein STX4 by selectively interacting with the STX4 transmembrane domain and this promotes surface expression of the dopamine transporter SLC6A3/DAT at neurite tips by facilitating fusion of SLC6A3-containing transport vesicles with the plasma membrane. The chain is Pancreatic lipase-related protein 2 from Homo sapiens (Human).